A 771-amino-acid chain; its full sequence is MRQNSDYPSLGPFFFAGKIKLSIATESFSAMKRSRAESASGPQQPSRRQPQTSCDLCRSRKIKCDRGTPCGNCRTRGLACSIMSPSSAPSPGASSAESAGHGRLDTAILARLAALEQAVFRSTSAVGGSGNAENGAHGDATPRVPLSGLEREGRQTANFLDKAYDRCSSASTRSGYRPLDIRVAESCRDSFATGAPDPVWLMPQKDAVAMVHDFVENIYHLMPIVHIGSTVSVIDNVYPALQAGNINHVDPAQVALILGICAACAFFWDGGVPCQHRFETEGEATSASLIWKTSALYAFEEAQRRGSRSLEGAQACAILAYLTYNMDGPSTRFYRLHTCSVTACRELGIHLVDSRGCESTDSTARRELKRRLWWHVAATDWMLGLNGGPLDGTYTVHPRQARVALPRNLNDSDLAIDSEILTMPPHVPTQASCFLQVIRLAEICRMVVDSQSPDDSIADTAYNERVLASDELFKKAIESMPPPLVLTSPIPEGAPRFLCLQRASLHLGFHSRRARLLRPFLLYKDSDGRQGTTYRRSRELCVRSAQTVLEISTSLLEHSLRIRSPEPFRRQILHHPGHHSCPASPIHRLGVVVNHLFCACAILAFECSLRKNSSVHPRQQHRGAGGEDDLDGMLVHAYRLLAAAGEECTVAADLVCAMRGVFAKYRVDGDLATVDGRGGQNQIVGSSRSAMASVQTSAGGACNEQQQIGPAAWPGMRGAIPDENQPMGEGSLETGKAWDGFDKDLDDLFVANDTYCSWDQIFARLGSYCGP.

The interval 33–53 (RSRAESASGPQQPSRRQPQTS) is disordered. The segment covering 42–51 (PQQPSRRQPQ) has biased composition (low complexity). The zn(2)-C6 fungal-type DNA-binding region spans 54–80 (CDLCRSRKIKCDRGTPCGNCRTRGLAC). Residues 125-150 (AVGGSGNAENGAHGDATPRVPLSGLE) are disordered.

It is found in the nucleus. Transcription factor; part of the gene cluster that mediates the biosynthesis of the toxin tenuazonic acid (TeA), an inhibitor of protein biosynthesis on ribosomes by suppressing the release of new protein. Directly regulates the expression of the hybrid PKS-NRPS synthetase TAS1 and the subsequent production of TeA. This is Transcription factor TAS2 from Pyricularia oryzae (strain 70-15 / ATCC MYA-4617 / FGSC 8958) (Rice blast fungus).